The chain runs to 858 residues: Adenylate cyclase, germination specific (858 aa).

Residues 1 to 18 (MKKTFVKILSKSYVEGYP) are Cytoplasmic-facing. The helical; Signal-anchor for type II membrane protein transmembrane segment at 19 to 41 (VGFFIGLIILAIFGSMVCIFSFM) threads the bilayer. Residues 42-858 (HYSEEENSNI…DENVESKKNK (817 aa)) are Extracellular-facing. Residues 86–317 (VNPNFDRNDF…DCVLKLWIFT (232 aa)) form the CHASE domain. The region spanning 396–526 (CVFFLDIAGF…DTVNVASRME (131 aa)) is the Guanylate cyclase domain. 3 residues coordinate Mg(2+): Asp401, Ile402, and Asp445. Disordered regions lie at residues 650–691 (YYYH…YHDT), 767–803 (SDNVNNYENNNNFSDKIENNDGDNNNINDNNYKSTNE), and 827–858 (ENCDNNDDNNNNNNNNNNNNNNDENVESKKNK). 3 stretches are compositionally biased toward low complexity: residues 767–778 (SDNVNNYENNNN), 788–797 (GDNNNINDNN), and 834–849 (DNNNNNNNNNNNNNND).

This sequence belongs to the adenylyl cyclase class-4/guanylyl cyclase family.

Its subcellular location is the membrane. The enzyme catalyses ATP = 3',5'-cyclic AMP + diphosphate. With respect to regulation, insensitive to guanine nucleotides. In terms of biological role, has a large extracellular domain which may be involved in the recognition of an extracellular signal present during germination, leading to activation or inhibition of cAMP synthesis by the cytoplasmic domain. The chain is Adenylate cyclase, germination specific (acgA) from Dictyostelium discoideum (Social amoeba).